We begin with the raw amino-acid sequence, 163 residues long: MKDISRRRFVLGTGATVAAATLAGCNGNGNGNGNGNGNGEPDTPEGRADQFLTDNDALMYDGDITDETGQDEVVVVTGAGNNGFAFDPAAIRVDVGTTVTWEWTGDGGAHNVVSEPESDFEFESDRVDEEGFTFEQTFDDEGVALYVCTPHRAQGMYGAVIVE.

Positions 1–24 (MKDISRRRFVLGTGATVAAATLAG) are cleaved as a signal peptide. An N-acetylcysteine modification is found at Cys25. Cys25 carries the S-archaeol cysteine lipid modification. Over residues 26–38 (NGNGNGNGNGNGN) the composition is skewed to gly residues. The segment at 26 to 48 (NGNGNGNGNGNGNGEPDTPEGRA) is disordered. The 116-residue stretch at 48 to 163 (ADQFLTDNDA…QGMYGAVIVE (116 aa)) folds into the Plastocyanin-like domain. 4 residues coordinate Cu cation: His110, Cys148, His151, and Met156.

Its subcellular location is the cell membrane. In terms of biological role, electron donor. Binds one copper ion. This chain is Halocyanin (hcy), found in Natronomonas pharaonis (Natronobacterium pharaonis).